The primary structure comprises 444 residues: Putative methylesterase 13, chloroplastic (444 aa).

3 disordered regions span residues Met1–Tyr32, Pro49–His90, and Ser124–Asp176. The transit peptide at Met1–Ser60 directs the protein to the chloroplast. Residues Pro49–Lys64 show a composition bias toward low complexity. Residues Gly65–His82 show a composition bias toward basic residues. Residues Ser124–Lys148 are compositionally biased toward polar residues. Residues Ser149 to Ser164 are compositionally biased toward low complexity. The AB hydrolase-1 domain occupies Phe190–Asp310. The active-site Acyl-ester intermediate is Asp264. Active-site charge relay system residues include Asp390 and His418.

Belongs to the AB hydrolase superfamily. Methylesterase family.

Its subcellular location is the plastid. It localises to the chloroplast. Its function is as follows. Putative methylesterase. The polypeptide is Putative methylesterase 13, chloroplastic (Arabidopsis thaliana (Mouse-ear cress)).